Here is a 415-residue protein sequence, read N- to C-terminus: Gamma-glutamyl phosphate reductase (415 aa).

Belongs to the gamma-glutamyl phosphate reductase family.

It is found in the cytoplasm. The catalysed reaction is L-glutamate 5-semialdehyde + phosphate + NADP(+) = L-glutamyl 5-phosphate + NADPH + H(+). The protein operates within amino-acid biosynthesis; L-proline biosynthesis; L-glutamate 5-semialdehyde from L-glutamate: step 2/2. Functionally, catalyzes the NADPH-dependent reduction of L-glutamate 5-phosphate into L-glutamate 5-semialdehyde and phosphate. The product spontaneously undergoes cyclization to form 1-pyrroline-5-carboxylate. The sequence is that of Gamma-glutamyl phosphate reductase from Lachnospira eligens (strain ATCC 27750 / DSM 3376 / VPI C15-48 / C15-B4) (Eubacterium eligens).